A 721-amino-acid chain; its full sequence is Polyribonucleotide nucleotidyltransferase (721 aa).

Mg(2+) contacts are provided by aspartate 495 and aspartate 501. The KH domain occupies 562–621 (PRLLSFRIDPELIGTVIGPGGRTIKGITERTNTKIDIEDSGIVTIASHDGAAADEAQKII). One can recognise an S1 motif domain in the interval 631–699 (GEVFSGAITR…NRGRINLTLR (69 aa)). A disordered region spans residues 700–721 (GVPQNGEEAEPAPAPTPVAPLN). Residues 711–721 (APAPTPVAPLN) are compositionally biased toward pro residues.

The protein belongs to the polyribonucleotide nucleotidyltransferase family. Requires Mg(2+) as cofactor.

It is found in the cytoplasm. The catalysed reaction is RNA(n+1) + phosphate = RNA(n) + a ribonucleoside 5'-diphosphate. Involved in mRNA degradation. Catalyzes the phosphorolysis of single-stranded polyribonucleotides processively in the 3'- to 5'-direction. The chain is Polyribonucleotide nucleotidyltransferase from Synechococcus sp. (strain WH7803).